We begin with the raw amino-acid sequence, 328 residues long: Type II secretion system protein K (328 aa).

Residues 1–7 constitute a propeptide, leader sequence; it reads MRSRQRG. Residues 8–28 form a helical membrane-spanning segment; it reads AALLVVLLILALMVTIAAVIT. The Periplasmic segment spans residues 29–328; the sequence is ERTGKAFLRT…QYGGYRTVNP (300 aa).

The protein belongs to the GSP K family. In terms of assembly, type II secretion is composed of four main components: the outer membrane complex, the inner membrane complex, the cytoplasmic secretion ATPase and the periplasm-spanning pseudopilus. Interacts with core component OutG. In terms of processing, cleaved by prepilin peptidase.

The protein resides in the cell inner membrane. Functionally, component of the type II secretion system required for the energy-dependent secretion of extracellular factors such as proteases and toxins from the periplasm. Plays a role in pseudopilus assembly and seems to control its length. Interacts with the pseudopilus tip complex that is critical for the recognition and binding of secretion substrates. This Pectobacterium carotovorum subsp. carotovorum (Erwinia carotovora subsp. carotovora) protein is Type II secretion system protein K (outK).